Reading from the N-terminus, the 133-residue chain is ATP synthase epsilon chain (133 aa).

Belongs to the ATPase epsilon chain family. In terms of assembly, F-type ATPases have 2 components, CF(1) - the catalytic core - and CF(0) - the membrane proton channel. CF(1) has five subunits: alpha(3), beta(3), gamma(1), delta(1), epsilon(1). CF(0) has three main subunits: a, b and c.

The protein localises to the cell membrane. In terms of biological role, produces ATP from ADP in the presence of a proton gradient across the membrane. This Bacillus mycoides (strain KBAB4) (Bacillus weihenstephanensis) protein is ATP synthase epsilon chain.